The primary structure comprises 73 residues: Dermaseptin-1 (73 aa).

A signal peptide spans 1–22 (MAFLKKSIFLALFLGMVSLSIC). A propeptide spans 23 to 43 (EEEKRENEGEEEQEDDEQSEM) (removed in mature form). The disordered stretch occupies residues 25 to 46 (EKRENEGEEEQEDDEQSEMKRG). Positions 30–40 (EGEEEQEDDEQ) are enriched in acidic residues. A Leucine amide modification is found at Leu-70. Residues 72-73 (EQ) constitute a propeptide, removed in mature form.

In terms of tissue distribution, expressed by the skin glands.

It is found in the secreted. In terms of biological role, has antiparasitic activity against trypomastigote form of T.cruzi (IC(50)=0.68 uM) in vitro but not against L.infantum. Probably acts by permeabilizing cell membranes. In vitro, shows no cytotoxicity against macrophages. Has antibacterial activity. This Pithecopus nordestinus (Northeastern Brazilian leaf frog) protein is Dermaseptin-1.